Here is a 99-residue protein sequence, read N- to C-terminus: Large ribosomal subunit protein eL30 (99 aa).

This sequence belongs to the eukaryotic ribosomal protein eL30 family.

In Pyrococcus horikoshii (strain ATCC 700860 / DSM 12428 / JCM 9974 / NBRC 100139 / OT-3), this protein is Large ribosomal subunit protein eL30 (rpl30e).